The chain runs to 74 residues: Antimicrobial peptide HsAp1 (74 aa).

The first 21 residues, 1–21 (MSRRVILTLVLVTILVKTMAG), serve as a signal peptide directing secretion. Positions 22–33 (MESKKVETTDEI) are excised as a propeptide. At proline 65 the chain carries Proline amide. The propeptide occupies 69-74 (AISEQT).

Belongs to the non-disulfide-bridged peptide (NDBP) superfamily. Medium-length antimicrobial peptide (group 3) family. As to expression, expressed by the venom gland.

It localises to the secreted. The protein localises to the target cell membrane. In terms of biological role, possesses antimicrobial activity against both Gram-negative (MIC=23.8-51.2 uM) and Gram-positive (MIC=11.8-46.5 uM) bacteria, as well as against the fungus C.tropicalis (MIC=48.6 uM). Also possesses a relatively high hemolytic activity. May act by disrupting the integrity of the bacterial cell membrane. This chain is Antimicrobial peptide HsAp1, found in Heterometrus spinifer (Asia giant forest scorpion).